The chain runs to 286 residues: Urease accessory protein UreD (286 aa).

This sequence belongs to the UreD family. UreD, UreF and UreG form a complex that acts as a GTP-hydrolysis-dependent molecular chaperone, activating the urease apoprotein by helping to assemble the nickel containing metallocenter of UreC. The UreE protein probably delivers the nickel.

It is found in the cytoplasm. In terms of biological role, required for maturation of urease via the functional incorporation of the urease nickel metallocenter. The chain is Urease accessory protein UreD from Rhodopseudomonas palustris (strain BisA53).